The chain runs to 159 residues: Large ribosomal subunit protein eL29 (159 aa).

Positions 1-26 (MAKSKNHTTHNQSRKWHRNGIKKPRS) are enriched in basic residues. A disordered region spans residues 1–32 (MAKSKNHTTHNQSRKWHRNGIKKPRSQRYESL). Lys5 is subject to N6-methyllysine. Ser31 carries the post-translational modification Phosphoserine. Lys33 is subject to N6-acetyllysine. Over residues 117 to 127 (RLCRPKAKAKA) the composition is skewed to basic residues. The disordered stretch occupies residues 117 to 159 (RLCRPKAKAKAKAKDQTKAQAAAPASVPAQAPKRTQAPTKASE). A compositionally biased stretch (low complexity) spans 134-149 (KAQAAAPASVPAQAPK). Ser142 carries the phosphoserine modification.

It belongs to the eukaryotic ribosomal protein eL29 family. As to quaternary structure, component of the large ribosomal subunit.

It localises to the cytoplasm. Its function is as follows. Component of the large ribosomal subunit. The ribosome is a large ribonucleoprotein complex responsible for the synthesis of proteins in the cell. The protein is Large ribosomal subunit protein eL29 (RPL29) of Homo sapiens (Human).